The chain runs to 287 residues: Protein PXR1 (287 aa).

The 48-residue stretch at 25–72 folds into the G-patch domain; the sequence is TSRFGHLQLEKFGWKPGMGLGMSPTSSHKTHIKVSIKDDNLGLGAKIK. Residues 143-155 show a composition bias toward basic and acidic residues; that stretch reads LKSYSNDKKRSRD. The interval 143–254 is disordered; it reads LKSYSNDKKR…TTASNIPSTV (112 aa). Residues 163-190 are compositionally biased toward basic residues; the sequence is SKNKSKKQKKDKKDKKDKKDKKDKKDKK. A compositionally biased stretch (basic and acidic residues) spans 191 to 200; that stretch reads DKKDKTEKKE. Basic residues predominate over residues 201–220; sequence KKEKKEKKEKKEKKDKKDKK. Over residues 221 to 230 the composition is skewed to basic and acidic residues; that stretch reads DKKDKIDKKD. Positions 239–251 are enriched in polar residues; the sequence is NNIEVSTTASNIP.

It belongs to the PINX1 family.

It is found in the nucleus. The protein localises to the nucleolus. Involved in rRNA-processing at A0, A1 and A2 sites and negatively regulates telomerase. The chain is Protein PXR1 (PXR1) from Vanderwaltozyma polyspora (strain ATCC 22028 / DSM 70294 / BCRC 21397 / CBS 2163 / NBRC 10782 / NRRL Y-8283 / UCD 57-17) (Kluyveromyces polysporus).